The following is a 1378-amino-acid chain: DNA-directed RNA polymerase subunit beta (1378 aa).

Belongs to the RNA polymerase beta chain family. As to quaternary structure, the RNAP catalytic core consists of 2 alpha, 1 beta, 1 beta' and 1 omega subunit. When a sigma factor is associated with the core the holoenzyme is formed, which can initiate transcription.

The enzyme catalyses RNA(n) + a ribonucleoside 5'-triphosphate = RNA(n+1) + diphosphate. In terms of biological role, DNA-dependent RNA polymerase catalyzes the transcription of DNA into RNA using the four ribonucleoside triphosphates as substrates. The protein is DNA-directed RNA polymerase subunit beta of Campylobacter jejuni (strain RM1221).